We begin with the raw amino-acid sequence, 486 residues long: N-succinylglutamate 5-semialdehyde dehydrogenase (486 aa).

220-225 is an NAD(+) binding site; it reads GSSRTG. Active-site residues include Glu243 and Cys277.

The protein belongs to the aldehyde dehydrogenase family. AstD subfamily.

It catalyses the reaction N-succinyl-L-glutamate 5-semialdehyde + NAD(+) + H2O = N-succinyl-L-glutamate + NADH + 2 H(+). It functions in the pathway amino-acid degradation; L-arginine degradation via AST pathway; L-glutamate and succinate from L-arginine: step 4/5. Functionally, catalyzes the NAD-dependent reduction of succinylglutamate semialdehyde into succinylglutamate. The protein is N-succinylglutamate 5-semialdehyde dehydrogenase of Shewanella baltica (strain OS155 / ATCC BAA-1091).